We begin with the raw amino-acid sequence, 100 residues long: Integration host factor subunit alpha (100 aa).

The protein belongs to the bacterial histone-like protein family. As to quaternary structure, heterodimer of an alpha and a beta chain.

Functionally, this protein is one of the two subunits of integration host factor, a specific DNA-binding protein that functions in genetic recombination as well as in transcriptional and translational control. This Caulobacter sp. (strain K31) protein is Integration host factor subunit alpha.